A 103-amino-acid chain; its full sequence is Flagellar hook-basal body complex protein FliE (103 aa).

Belongs to the FliE family.

It localises to the bacterial flagellum basal body. The protein is Flagellar hook-basal body complex protein FliE of Cronobacter sakazakii (strain ATCC BAA-894) (Enterobacter sakazakii).